Reading from the N-terminus, the 218-residue chain is Cytochrome c biogenesis ATP-binding export protein CcmA (218 aa).

The ABC transporter domain maps to 2 to 217; sequence LEAKNLTCIR…KSCLSACCAV (216 aa). 34–41 contributes to the ATP binding site; the sequence is GPNGAGKT.

It belongs to the ABC transporter superfamily. CcmA exporter (TC 3.A.1.107) family. In terms of assembly, the complex is composed of two ATP-binding proteins (CcmA) and two transmembrane proteins (CcmB).

It localises to the cell inner membrane. It carries out the reaction heme b(in) + ATP + H2O = heme b(out) + ADP + phosphate + H(+). Functionally, part of the ABC transporter complex CcmAB involved in the biogenesis of c-type cytochromes; once thought to export heme, this seems not to be the case, but its exact role is uncertain. Responsible for energy coupling to the transport system. This is Cytochrome c biogenesis ATP-binding export protein CcmA from Yersinia pseudotuberculosis serotype I (strain IP32953).